The following is a 327-amino-acid chain: Putative pumilio homolog 19 (327 aa).

Residues 1 to 324 (MAVSDNTFSM…NIANILDTFR (324 aa)) enclose the PUM-HD domain. 6 Pumilio repeats span residues 79–114 (SDSDYFMSIVTTKFGSRRVQKLLGKSDDVDAFFCAA), 115–149 (ILRRFLHITTDKYASYVTIRAMVVFDKVMKKALYE), 150–185 (RILYHALDLACDQHGCIALNDIITDADDPYYRDQLL), 186–222 (ELVVSNALRLSNDASGNFVVQHVLTLYDSRCIHNIAV), 223–260 (NLYGQCIELSFKKYGSYIVEKLLEVEESMVVVVVELLG), and 261–295 (CDGDRLMRLARNEFGNFVVVKALRFTKEMRMDLFW).

It localises to the cytoplasm. Functionally, sequence-specific RNA-binding protein that regulates translation and mRNA stability by binding the 3'-UTR of target mRNAs. The sequence is that of Putative pumilio homolog 19 (APUM19) from Arabidopsis thaliana (Mouse-ear cress).